Here is a 268-residue protein sequence, read N- to C-terminus: Secreted RxLR effector protein 5 (268 aa).

The N-terminal stretch at 1–21 is a signal peptide; it reads MRGAFYMAITLFLARSRSATA. The short motif at 48-63 is the RxLR-dEER element; sequence RYLRDGLALSAANEER. Asn104 carries N-linked (GlcNAc...) asparagine glycosylation.

This sequence belongs to the RxLR effector family.

Its subcellular location is the secreted. It is found in the host nucleus. Functionally, effector that acts as a broad suppressor of cell death to interrupt plant immunity. Inhibits cell death induced by cell death-inducing proteins, including the PAMP elicitor INF1 from P.infestans. This chain is Secreted RxLR effector protein 5, found in Plasmopara viticola (Downy mildew of grapevine).